The chain runs to 103 residues: Small ribosomal subunit protein uS10 (103 aa).

This sequence belongs to the universal ribosomal protein uS10 family. In terms of assembly, part of the 30S ribosomal subunit.

Functionally, involved in the binding of tRNA to the ribosomes. This Desulfatibacillum aliphaticivorans protein is Small ribosomal subunit protein uS10.